A 92-amino-acid polypeptide reads, in one-letter code: UPF0223 protein SP_1404 (92 aa).

It belongs to the UPF0223 family.

In Streptococcus pneumoniae serotype 4 (strain ATCC BAA-334 / TIGR4), this protein is UPF0223 protein SP_1404.